A 260-amino-acid polypeptide reads, in one-letter code: Adenosine 5'-phosphosulfate reductase (260 aa).

[4Fe-4S] cluster is bound by residues Cys130, Cys131, Cys213, and Cys216. Cys241 serves as the catalytic Nucleophile; cysteine thiosulfonate intermediate.

The protein belongs to the PAPS reductase family. CysH subfamily. The cofactor is [4Fe-4S] cluster.

The protein resides in the cytoplasm. The enzyme catalyses [thioredoxin]-disulfide + sulfite + AMP + 2 H(+) = adenosine 5'-phosphosulfate + [thioredoxin]-dithiol. Its pathway is sulfur metabolism; hydrogen sulfide biosynthesis; sulfite from sulfate. In terms of biological role, catalyzes the formation of sulfite from adenosine 5'-phosphosulfate (APS) using thioredoxin as an electron donor. In Agrobacterium fabrum (strain C58 / ATCC 33970) (Agrobacterium tumefaciens (strain C58)), this protein is Adenosine 5'-phosphosulfate reductase.